The following is a 114-amino-acid chain: Non-specific lipid-transfer protein 2 (114 aa).

Residues 1–23 form the signal peptide; it reads MEMVNKIACFVLLCMVVVAPHAE. 4 disulfide bridges follow: cysteine 27/cysteine 73, cysteine 37/cysteine 50, cysteine 51/cysteine 96, and cysteine 71/cysteine 110.

Belongs to the plant LTP family.

In terms of biological role, plant non-specific lipid-transfer proteins transfer phospholipids as well as galactolipids across membranes. May play a role in wax or cutin deposition in the cell walls of expanding epidermal cells and certain secretory tissues. The protein is Non-specific lipid-transfer protein 2 of Solanum chilense (Tomato).